Reading from the N-terminus, the 103-residue chain is O2 contryphan Vc1 (103 aa).

Positions 1 to 23 (MGKLTILFLVAAALLSTQVMVQG) are cleaved as a signal peptide. A propeptide spanning residues 24 to 67 (DGAHERTEAEEPQHHGAKRQDGTGGYPVDDVDMMQRIFRTPLKR) is cleaved from the precursor. Residues 25–44 (GAHERTEAEEPQHHGAKRQD) show a composition bias toward basic and acidic residues. Residues 25–50 (GAHERTEAEEPQHHGAKRQDGTGGYP) form a disordered region. A Pyrrolidone carboxylic acid modification is found at Gln-68. Cys-70 and Cys-83 are oxidised to a cystine. A propeptide spanning residues 99 to 103 (RRGRQ) is cleaved from the precursor.

The protein belongs to the O2 superfamily. Pyrrolidone carboxylic acid at position 1 has no significant effect on the structure of contryphan-Vc1. Expressed by the venom gland.

The protein resides in the secreted. Its function is as follows. Unknown. Intracranial injection of the peptide into mice does not produce toxic effects. In addition, the peptide does not produce any observable changes to normal or depolarization-induced intracellular calcium levels in mouse dorsal root ganglion cells. The chain is O2 contryphan Vc1 from Conus victoriae (Queen Victoria cone).